Consider the following 701-residue polypeptide: Elongation factor G (701 aa).

Residues threonine 8 to lysine 290 form the tr-type G domain. GTP is bound by residues alanine 17–threonine 24, aspartate 88–histidine 92, and asparagine 142–aspartate 145.

Belongs to the TRAFAC class translation factor GTPase superfamily. Classic translation factor GTPase family. EF-G/EF-2 subfamily.

It localises to the cytoplasm. Catalyzes the GTP-dependent ribosomal translocation step during translation elongation. During this step, the ribosome changes from the pre-translocational (PRE) to the post-translocational (POST) state as the newly formed A-site-bound peptidyl-tRNA and P-site-bound deacylated tRNA move to the P and E sites, respectively. Catalyzes the coordinated movement of the two tRNA molecules, the mRNA and conformational changes in the ribosome. This chain is Elongation factor G, found in Buchnera aphidicola subsp. Cinara cedri (strain Cc).